The following is a 342-amino-acid chain: N-acetyl-gamma-glutamyl-phosphate reductase (342 aa).

Residue C149 is part of the active site.

This sequence belongs to the NAGSA dehydrogenase family. Type 1 subfamily.

The protein resides in the cytoplasm. It catalyses the reaction N-acetyl-L-glutamate 5-semialdehyde + phosphate + NADP(+) = N-acetyl-L-glutamyl 5-phosphate + NADPH + H(+). Its pathway is amino-acid biosynthesis; L-arginine biosynthesis; N(2)-acetyl-L-ornithine from L-glutamate: step 3/4. Functionally, catalyzes the NADPH-dependent reduction of N-acetyl-5-glutamyl phosphate to yield N-acetyl-L-glutamate 5-semialdehyde. The sequence is that of N-acetyl-gamma-glutamyl-phosphate reductase from Cereibacter sphaeroides (strain ATCC 17023 / DSM 158 / JCM 6121 / CCUG 31486 / LMG 2827 / NBRC 12203 / NCIMB 8253 / ATH 2.4.1.) (Rhodobacter sphaeroides).